The chain runs to 211 residues: Probable chemoreceptor glutamine deamidase CheD (211 aa).

Belongs to the CheD family.

The enzyme catalyses L-glutaminyl-[protein] + H2O = L-glutamyl-[protein] + NH4(+). Functionally, probably deamidates glutamine residues to glutamate on methyl-accepting chemotaxis receptors (MCPs), playing an important role in chemotaxis. The protein is Probable chemoreceptor glutamine deamidase CheD of Hahella chejuensis (strain KCTC 2396).